Here is a 134-residue protein sequence, read N- to C-terminus: Large ribosomal subunit protein uL16c (134 aa).

This sequence belongs to the universal ribosomal protein uL16 family. As to quaternary structure, part of the 50S ribosomal subunit.

The protein localises to the plastid. The protein resides in the chloroplast. This chain is Large ribosomal subunit protein uL16c, found in Oltmannsiellopsis viridis (Marine flagellate).